The chain runs to 324 residues: Protein translocase subunit SecF (324 aa).

The next 6 helical transmembrane spans lie at 16-36 (FFWAAPVTFGFSVFLMAASLV), 145-165 (LIRSAILAVAAACAGIAVYIW), 174-194 (LGSVAALIHDVLVTIGVFALF), 201-221 (TTVAALLTVLGYSINDTVVVF), 247-269 (TLSRTIMTLMTTLIALVSLLVFG), and 276-295 (FVFAITFGVVIGTYSSVYMA).

This sequence belongs to the SecD/SecF family. SecF subfamily. In terms of assembly, forms a complex with SecD. Part of the essential Sec protein translocation apparatus which comprises SecA, SecYEG and auxiliary proteins SecDF-YajC and YidC.

The protein resides in the cell inner membrane. Its function is as follows. Part of the Sec protein translocase complex. Interacts with the SecYEG preprotein conducting channel. SecDF uses the proton motive force (PMF) to complete protein translocation after the ATP-dependent function of SecA. This is Protein translocase subunit SecF from Cereibacter sphaeroides (strain ATCC 17023 / DSM 158 / JCM 6121 / CCUG 31486 / LMG 2827 / NBRC 12203 / NCIMB 8253 / ATH 2.4.1.) (Rhodobacter sphaeroides).